Reading from the N-terminus, the 203-residue chain is Small ribosomal subunit protein uS4c (203 aa).

The S4 RNA-binding domain occupies 91–154 (MRLDNIIFRL…KYESIISKNI (64 aa)).

This sequence belongs to the universal ribosomal protein uS4 family. Part of the 30S ribosomal subunit. Contacts protein S5. The interaction surface between S4 and S5 is involved in control of translational fidelity.

The protein resides in the plastid. The protein localises to the chloroplast. Functionally, one of the primary rRNA binding proteins, it binds directly to 16S rRNA where it nucleates assembly of the body of the 30S subunit. In terms of biological role, with S5 and S12 plays an important role in translational accuracy. The protein is Small ribosomal subunit protein uS4c (rps4) of Lopidium struthiopteris (Moss).